The following is a 387-amino-acid chain: Dual specificity protein phosphatase MPK-4 (387 aa).

Over residues 1 to 15 the composition is skewed to polar residues; the sequence is MEQSQSQRQAWPSSS. The interval 1–27 is disordered; that stretch reads MEQSQSQRQAWPSSSAGGGKAQDSGVL. Positions 35–182 constitute a Tyrosine-protein phosphatase domain; the sequence is GPVSIDEVDT…LKLFRRMGCK (148 aa). The Phosphocysteine intermediate role is filled by Cys-126. The tract at residues 248–267 is disordered; it reads LEHKPRDRPPQEVVPKEKEE.

The protein belongs to the protein-tyrosine phosphatase family. Non-receptor class dual specificity subfamily. Interacts (via tyrosine-protein phosphatase domain) with bsk/JNK; the interaction dephosphorylates bsk.

Its subcellular location is the nucleus. It is found in the cytoplasm. The enzyme catalyses O-phospho-L-tyrosyl-[protein] + H2O = L-tyrosyl-[protein] + phosphate. It carries out the reaction O-phospho-L-seryl-[protein] + H2O = L-seryl-[protein] + phosphate. It catalyses the reaction O-phospho-L-threonyl-[protein] + H2O = L-threonyl-[protein] + phosphate. With respect to regulation, inhibited by the tyrosine phosphatase inhibitor sodium vanadate. Functionally, dual specificity phosphatase; can dephosphorylate both phosphotyrosine and phosphoserine or phosphothreonine residues. May suppress bsk/JNK activation during the immune response. This Drosophila melanogaster (Fruit fly) protein is Dual specificity protein phosphatase MPK-4.